A 177-amino-acid chain; its full sequence is Adenine phosphoribosyltransferase (177 aa).

This sequence belongs to the purine/pyrimidine phosphoribosyltransferase family. Homodimer.

The protein resides in the cytoplasm. The catalysed reaction is AMP + diphosphate = 5-phospho-alpha-D-ribose 1-diphosphate + adenine. The protein operates within purine metabolism; AMP biosynthesis via salvage pathway; AMP from adenine: step 1/1. Catalyzes a salvage reaction resulting in the formation of AMP, that is energically less costly than de novo synthesis. In Mycoplasma pneumoniae (strain ATCC 29342 / M129 / Subtype 1) (Mycoplasmoides pneumoniae), this protein is Adenine phosphoribosyltransferase.